The primary structure comprises 245 residues: Small ribosomal subunit protein uS2 (245 aa).

This sequence belongs to the universal ribosomal protein uS2 family.

The sequence is that of Small ribosomal subunit protein uS2 from Dehalococcoides mccartyi (strain CBDB1).